We begin with the raw amino-acid sequence, 103 residues long: Small ribosomal subunit protein uS10 (103 aa).

It belongs to the universal ribosomal protein uS10 family. Part of the 30S ribosomal subunit.

Its function is as follows. Involved in the binding of tRNA to the ribosomes. This Pseudomonas aeruginosa (strain LESB58) protein is Small ribosomal subunit protein uS10.